Reading from the N-terminus, the 127-residue chain is Small ribosomal subunit protein uS12 (127 aa).

D89 bears the 3-methylthioaspartic acid mark. Positions 101–127 (ALDTSGVAGRTQRRSKYGAKRPKEAKK) are disordered. A compositionally biased stretch (basic residues) spans 111–127 (TQRRSKYGAKRPKEAKK).

This sequence belongs to the universal ribosomal protein uS12 family. As to quaternary structure, part of the 30S ribosomal subunit. Contacts proteins S8 and S17. May interact with IF1 in the 30S initiation complex.

Its function is as follows. With S4 and S5 plays an important role in translational accuracy. Interacts with and stabilizes bases of the 16S rRNA that are involved in tRNA selection in the A site and with the mRNA backbone. Located at the interface of the 30S and 50S subunits, it traverses the body of the 30S subunit contacting proteins on the other side and probably holding the rRNA structure together. The combined cluster of proteins S8, S12 and S17 appears to hold together the shoulder and platform of the 30S subunit. The sequence is that of Small ribosomal subunit protein uS12 from Flavobacterium psychrophilum (strain ATCC 49511 / DSM 21280 / CIP 103535 / JIP02/86).